Here is a 676-residue protein sequence, read N- to C-terminus: Mucin-1 (676 aa).

Positions 1–25 (MTPGIRAPFLLTLLLALVTDPNSVA) are cleaved as a signal peptide. The disordered stretch occupies residues 25–387 (ALSQDTSSSS…VHNGSLVPTT (363 aa)). Over 26–582 (LSQDTSSSST…QSWPGVPGWG (557 aa)) the chain is Extracellular. Tandem repeats lie at residues 40 to 59 (PVHSGSSAPATSSAVDSATT), 60 to 79 (PGHSGSSAPPTSSAVNSATT), 80 to 99 (PGHSGSSAPPTSSAVNSATT), 100 to 119 (PVHSGSSAPVTSSAVNSATT), 120 to 139 (PVHSGSSAPPTSSAVNSATT), 140 to 159 (PVHSGSSAPVTSSAVNSATT), 160 to 179 (PVHSGSSAPVTSSAVDSATT), 180 to 199 (PVHSGSSAPPTSSAVNSATT), 200 to 219 (PVHSGSSAPVTSSAVNSATT), 220 to 239 (PVHSGSSAPVTSSAVNSATT), 240 to 259 (PVHSGSSAPPTSSVVNSATT), 260 to 279 (PVHSGSSAPPTSSAVNLATT), and 280 to 299 (PVHSGSSTPATNSTTDSATT). The tract at residues 40–314 (PVHSGSSAPA…SSMQTTEAIS (275 aa)) is 13 X approximate tandem repeats of P-V-H-S-G-S-S-A-P-P-T-S-S-A-V-N-S-A-T-T. Residues Ser43, Ser45, and Ser46 are each glycosylated (O-linked (GalNAc...) serine). An O-linked (GalNAc...) threonine glycan is attached at Thr50. O-linked (GalNAc...) serine glycans are attached at residues Ser51, Ser52, and Ser56. Thr58 and Thr59 each carry an O-linked (GalNAc...) threonine glycan. 10 N-linked (GlcNAc...) asparagine glycosylation sites follow: Asn291, Asn323, Asn350, Asn380, Asn400, Asn413, Asn435, Asn479, Asn496, and Asn536. Residues 404 to 420 (TMATTTPVGNGTQSSVP) are compositionally biased toward polar residues. Residues 404–434 (TMATTTPVGNGTQSSVPSRHPVTPTPPAVSS) form a disordered region. One can recognise an SEA domain in the interval 463–570 (GVSFFLLSFH…INVGEMQFPS (108 aa)). A helical membrane pass occupies residues 583–603 (IALLVLVCILVALAIVYLIAL). Topologically, residues 604–676 (AVCQCRRKNY…PVVATTSANL (73 aa)) are cytoplasmic. S-palmitoyl cysteine attachment occurs at residues Cys606 and Cys608. The interaction with P53 stretch occupies residues 614-650 (GQLDIFPIQDSYHPMSEYPTYHTHGRYVPPGSTKRSP). Position 625 is a phosphotyrosine; by PDGFR (Tyr625). An Interaction with GRB2 motif is present at residues 625–628 (YHPM). Position 634 is a phosphotyrosine (Tyr634). The disordered stretch occupies residues 636–659 (THGRYVPPGSTKRSPYEEVSAGNG). Tyr640 carries the phosphotyrosine; by PDGFR modification. The tract at residues 645–652 (STKRSPYE) is required for interaction with GSK3B. Thr646 bears the Phosphothreonine; by PKC/PRKCD mark. Ser649 is subject to Phosphoserine; by GSK3-beta. Tyr651 carries the post-translational modification Phosphotyrosine; by CSK, EGFR and SRC. Residues 651–654 (YEEV) carry the Interaction with SRC and ESR1 motif. The tract at residues 655-662 (SAGNGSSL) is required for interaction with beta- and gamma-catenins. Tyr664 carries the phosphotyrosine modification. Positions 664–667 (YTNP) match the Required for interaction with AP1S2 motif.

The alpha subunit forms a tight, non-covalent heterodimeric complex with the proteolytically-released beta-subunit. Binds directly the SH2 domain of GRB2, and forms a MUC1/GRB2/SOS1 complex involved in RAS signaling. The cytoplasmic tail (MUC1CT) interacts with several proteins such as SRC, CTNNB1 and ERBs. Interaction with the SH2 domain of CSK decreases interaction with GSK3B. Interacts with CTNNB1/beta-catenin and JUP/gamma-catenin and promotes cell adhesion. Interaction with JUP/gamma-catenin is induced by heregulin. Binds PRKCD, ERBB2, ERBB3 and ERBB4. Heregulin (HRG) stimulates the interaction with ERBB2 and, to a much lesser extent, the interaction with ERBB3 and ERBB4. Interacts with P53 in response to DNA damage. Interacts with KLF4. Interacts with estrogen receptor alpha/ESR1, through its DNA-binding domain, and stimulates its transcription activity. Binds ADAM17. Probably both N- and O-glycosylated (in repeat region). In terms of processing, proteolytic cleavage in the SEA domain occurs in the endoplasmic reticulum by an autoproteolytic mechanism and requires the full-length SEA domain as well as requiring a Ser, Thr or Cys residue at the P + 1 site. Ectodomain shedding is mediated by ADAM17 in uterine epithelial cells. Post-translationally, dual palmitoylation on cysteine residues in the CQC motif is required for recycling from endosomes back to the plasma membrane. Phosphorylated on tyrosines and serine residues in the C-terminal. Phosphorylation on tyrosines in the C-terminal increases the nuclear location of MUC1 and beta-catenin. Phosphorylation by PKC delta induces binding of MUC1 to beta-catenin/CTNNB1 and thus decreases the formation of the beta-catenin/E-cadherin complex. Src-mediated phosphorylation inhibits interaction with GSK3B. Csk- or Src- or EGFR-mediated phosphorylation on Tyr-651 increases binding to beta-catenin/CTNNB1. GSK3B-mediated phosphorylation on Ser-649 decreases this interaction but restores the formation of the beta-cadherin/E-cadherin complex. On T-cell receptor activation, phosphorylated by LCK. PDGFR-mediated phosphorylation increases nuclear colocalization of MUC1CT and CTNNB1.

It localises to the apical cell membrane. The protein resides in the cell membrane. The protein localises to the cytoplasm. It is found in the nucleus. Its function is as follows. The alpha subunit has cell adhesive properties. Can act both as an adhesion and an anti-adhesion protein. May provide a protective layer on epithelial cells against bacterial and enzyme attack. In terms of biological role, the beta subunit contains a C-terminal domain which is involved in cell signaling, through phosphorylations and protein-protein interactions. Modulates signaling in ERK, Src and NF-kappaB pathways. In activated T-cells, influences directly or indirectly the Ras/MAPK pathway. Promotes tumor progression. Regulates P53-mediated transcription and determines cell fate in the genotoxic stress response. Binds, together with KLF4, the PE21 promoter element of P53 and represses P53 activity. This Mesocricetus auratus (Golden hamster) protein is Mucin-1 (MUC1).